The sequence spans 307 residues: Junctional adhesion molecule 2A (307 aa).

An N-terminal signal peptide occupies residues 1-18; sequence MLVCVSLLILIHSVPVSP. The Ig-like V-type domain occupies 19 to 112; sequence VTVSSRNPKV…EVSAPSDSIS (94 aa). Topologically, residues 19–226 are extracellular; it reads VTVSSRNPKV…FQTHDLNVAA (208 aa). 2 disulfides stabilise this stretch: C40–C102 and C147–C197. An Ig-like C2-type domain is found at 126–225; that stretch reads PQTPSCDVPS…TFQTHDLNVA (100 aa). The helical transmembrane segment at 227–247 threads the bilayer; the sequence is VVSAVVLVCVILFLCAFGVCL. The Cytoplasmic portion of the chain corresponds to 248–307; it reads AHRQGYFSRHRGRSFWIPHCHGVTHISSQNLNPSEHTQHSGYSHPPKEPQDFKHTQSFML. The segment covering 278 to 288 has biased composition (polar residues); it reads LNPSEHTQHSG. Residues 278–307 are disordered; sequence LNPSEHTQHSGYSHPPKEPQDFKHTQSFML. Over residues 292-301 the composition is skewed to basic and acidic residues; it reads PPKEPQDFKH.

It belongs to the immunoglobulin superfamily.

The protein localises to the cell membrane. The protein resides in the cell junction. Its subcellular location is the tight junction. In terms of biological role, junctional adhesion protein that mediates heterotypic cell-cell interactions to regulate different cellular processes. During myogenesis, it is involved in myocyte fusion through the binding of jam3b on neighboring myocytes. This Danio rerio (Zebrafish) protein is Junctional adhesion molecule 2A (jam2a).